A 214-amino-acid chain; its full sequence is uncharacterized protein (214 aa).

This is an uncharacterized protein from Sinorhizobium fredii (strain NBRC 101917 / NGR234).